Here is a 2241-residue protein sequence, read N- to C-terminus: Large tegument protein deneddylase (2241 aa).

The segment at 1–238 is deubiquitination activity; it reads MKVTQASCHQ…IDLTGVVRES (238 aa). One can recognise a Peptidase C76 domain in the interval 4-226; it reads TQASCHQGDI…AARLVSTYRD (223 aa). Active-site residues include Cys24, Asp160, and His162. The tract at residues 239-314 is disordered; it reads ADTAATTTTA…STTSKTLATA (76 aa). Positions 240–250 are enriched in low complexity; the sequence is DTAATTTTAAP. The segment covering 251-268 has biased composition (pro residues); the sequence is SLPPLPDPIVDPGCPPGV. The span at 304-314 shows a compositional bias: low complexity; the sequence is PSTTSKTLATA. The segment at 327-331 is interaction with inner tegument protein; that stretch reads SSAVP. The tract at residues 1170–1229 is disordered; the sequence is RSSQQKMEEQLQETRQQMTETSERLDRSLRQDPGSSSVTRVPEKPFKGQELAGRITPPPA. Over residues 1190–1199 the composition is skewed to basic and acidic residues; that stretch reads TSERLDRSLR.

Belongs to the herpesviridae large tegument protein family. As to quaternary structure, interacts with host CUL1 and CUL4A; these interactions inhibit the E3 ligase activity of cullins. Interacts with inner tegument protein. Interacts with capsid vertex specific component CVC2. Interacts with the major capsid protein/MCP.

Its subcellular location is the virion tegument. It is found in the host cytoplasm. The protein localises to the host nucleus. It carries out the reaction Thiol-dependent hydrolysis of ester, thioester, amide, peptide and isopeptide bonds formed by the C-terminal Gly of ubiquitin (a 76-residue protein attached to proteins as an intracellular targeting signal).. Functionally, large tegument protein that plays multiple roles in the viral cycle. During viral entry, remains associated with the capsid while most of the tegument is detached and participates in the capsid transport toward the host nucleus. Plays a role in the routing of the capsid at the nuclear pore complex and subsequent uncoating. Within the host nucleus, acts as a deneddylase and promotes the degradation of nuclear CRLs (cullin-RING ubiquitin ligases) and thereby stabilizes nuclear CRL substrates, while cytoplasmic CRLs remain unaffected. These modifications prevent host cell cycle S-phase progression and create a favorable environment allowing efficient viral genome replication. Participates later in the secondary envelopment of capsids. Indeed, plays a linker role for the association of the outer viral tegument to the capsids together with the inner tegument protein. This Human cytomegalovirus (strain AD169) (HHV-5) protein is Large tegument protein deneddylase (UL48).